The sequence spans 117 residues: Large ribosomal subunit protein uL18 (117 aa).

Belongs to the universal ribosomal protein uL18 family. Part of the 50S ribosomal subunit; part of the 5S rRNA/L5/L18/L25 subcomplex. Contacts the 5S and 23S rRNAs.

This is one of the proteins that bind and probably mediate the attachment of the 5S RNA into the large ribosomal subunit, where it forms part of the central protuberance. In Haemophilus ducreyi (strain 35000HP / ATCC 700724), this protein is Large ribosomal subunit protein uL18.